We begin with the raw amino-acid sequence, 348 residues long: S-adenosylmethionine:tRNA ribosyltransferase-isomerase (348 aa).

It belongs to the QueA family. In terms of assembly, monomer.

The protein resides in the cytoplasm. It catalyses the reaction 7-aminomethyl-7-carbaguanosine(34) in tRNA + S-adenosyl-L-methionine = epoxyqueuosine(34) in tRNA + adenine + L-methionine + 2 H(+). It functions in the pathway tRNA modification; tRNA-queuosine biosynthesis. Functionally, transfers and isomerizes the ribose moiety from AdoMet to the 7-aminomethyl group of 7-deazaguanine (preQ1-tRNA) to give epoxyqueuosine (oQ-tRNA). This is S-adenosylmethionine:tRNA ribosyltransferase-isomerase from Tolumonas auensis (strain DSM 9187 / NBRC 110442 / TA 4).